Consider the following 298-residue polypeptide: Probable alpha-L-glutamate ligase (298 aa).

One can recognise an ATP-grasp domain in the interval methionine 104–glutamate 287. ATP is bound by residues lysine 141, glutamate 178–tyrosine 179, aspartate 187, and arginine 211–asparagine 213. Mg(2+)-binding residues include aspartate 248, glutamate 260, and asparagine 262. Residues aspartate 248, glutamate 260, and asparagine 262 each coordinate Mn(2+).

It belongs to the RimK family. Mg(2+) serves as cofactor. The cofactor is Mn(2+).

This chain is Probable alpha-L-glutamate ligase, found in Aeromonas salmonicida (strain A449).